The chain runs to 145 residues: 3-dehydroquinate dehydratase (145 aa).

Residue Tyr24 is the Proton acceptor of the active site. Asn75, His81, and Asp88 together coordinate substrate. His101 functions as the Proton donor in the catalytic mechanism. Substrate is bound by residues 102-103 and Arg112; that span reads LS.

It belongs to the type-II 3-dehydroquinase family. As to quaternary structure, homododecamer.

The catalysed reaction is 3-dehydroquinate = 3-dehydroshikimate + H2O. It participates in metabolic intermediate biosynthesis; chorismate biosynthesis; chorismate from D-erythrose 4-phosphate and phosphoenolpyruvate: step 3/7. Functionally, catalyzes a trans-dehydration via an enolate intermediate. This is 3-dehydroquinate dehydratase from Phenylobacterium zucineum (strain HLK1).